The chain runs to 351 residues: D-alanine--D-alanine ligase (351 aa).

In terms of domain architecture, ATP-grasp spans Lys146 to Leu340. Ala173–Ser226 contacts ATP. Mg(2+) contacts are provided by Asp295, Glu307, and Asn309.

Belongs to the D-alanine--D-alanine ligase family. Mg(2+) serves as cofactor. It depends on Mn(2+) as a cofactor.

The protein localises to the cytoplasm. It carries out the reaction 2 D-alanine + ATP = D-alanyl-D-alanine + ADP + phosphate + H(+). It participates in cell wall biogenesis; peptidoglycan biosynthesis. Its function is as follows. Cell wall formation. In Pediococcus pentosaceus (strain ATCC 25745 / CCUG 21536 / LMG 10740 / 183-1w), this protein is D-alanine--D-alanine ligase.